Here is an 89-residue protein sequence, read N- to C-terminus: Small ribosomal subunit protein uS15c (89 aa).

The protein belongs to the universal ribosomal protein uS15 family. In terms of assembly, part of the 30S ribosomal subunit.

The protein resides in the plastid. It localises to the chloroplast. The sequence is that of Small ribosomal subunit protein uS15c (rps15) from Chloranthus spicatus (Chulantree).